Here is a 506-residue protein sequence, read N- to C-terminus: uncharacterized protein (506 aa).

Residue 282-289 participates in ATP binding; the sequence is GIQGTGKS.

It belongs to the AAA ATPase family. Highly divergent.

The protein resides in the plastid. Its subcellular location is the chloroplast. This is an uncharacterized protein from Guillardia theta (Cryptophyte).